The following is a 126-amino-acid chain: MAIAKAEILDAIANMTVLELSQLIKEMEEKFGVSAAAAAVVAAAPAAGAAAAPAEEQTEFTVMLTAVGESKVNVIKVVRAVTGLGLKEAKDLVDGAPKPVKEGIAKADAEAIQKQLAEAGATAEIK.

Belongs to the bacterial ribosomal protein bL12 family. In terms of assembly, homodimer. Part of the ribosomal stalk of the 50S ribosomal subunit. Forms a multimeric L10(L12)X complex, where L10 forms an elongated spine to which 2 to 4 L12 dimers bind in a sequential fashion. Binds GTP-bound translation factors.

Functionally, forms part of the ribosomal stalk which helps the ribosome interact with GTP-bound translation factors. Is thus essential for accurate translation. This Nitrosospira multiformis (strain ATCC 25196 / NCIMB 11849 / C 71) protein is Large ribosomal subunit protein bL12.